The primary structure comprises 345 residues: Transcription initiation factor IIB (345 aa).

The TFIIB-type zinc-finger motif lies at 8-40 (VGRNCPHCSAVDSLQTDDVMGEVACTACALVVA). Zn(2+) is bound by residues C12, C15, C32, and C35. Disordered regions lie at residues 59-89 (DVDHHRERNANPTAATSAAGSLSAADPHMSS) and 318-345 (PTAGKRKVDKNSEPEASGGTKRVKREET). A compositionally biased stretch (low complexity) spans 71–83 (TAATSAAGSLSAA).

The protein belongs to the TFIIB family. As to quaternary structure, monomer. Interacts with RNA polymerase II subunits RPB1 and RPB2. Interacts with TBP; the interaction is direct.

It localises to the nucleus. Functionally, specifically binds to the promoter of the spliced leader (SL) RNA gene and thus is essential for SLRNA transcription. The protein is Transcription initiation factor IIB of Trypanosoma brucei brucei.